The chain runs to 387 residues: Succinate--CoA ligase [ADP-forming] subunit beta (387 aa).

Positions 9 to 236 (KELFAKHNVP…RDATDPLELK (228 aa)) constitute an ATP-grasp domain. Residues Lys45, 52-54 (GRG), Ser94, and Glu99 each bind ATP. Positions 191 and 205 each coordinate Mg(2+). Substrate-binding positions include Asn256 and 318–320 (GIT).

This sequence belongs to the succinate/malate CoA ligase beta subunit family. Heterotetramer of two alpha and two beta subunits. It depends on Mg(2+) as a cofactor.

The catalysed reaction is succinate + ATP + CoA = succinyl-CoA + ADP + phosphate. It carries out the reaction GTP + succinate + CoA = succinyl-CoA + GDP + phosphate. It functions in the pathway carbohydrate metabolism; tricarboxylic acid cycle; succinate from succinyl-CoA (ligase route): step 1/1. Its function is as follows. Succinyl-CoA synthetase functions in the citric acid cycle (TCA), coupling the hydrolysis of succinyl-CoA to the synthesis of either ATP or GTP and thus represents the only step of substrate-level phosphorylation in the TCA. The beta subunit provides nucleotide specificity of the enzyme and binds the substrate succinate, while the binding sites for coenzyme A and phosphate are found in the alpha subunit. This Mycobacterium sp. (strain JLS) protein is Succinate--CoA ligase [ADP-forming] subunit beta.